Here is a 32-residue protein sequence, read N- to C-terminus: Ferredoxin (32 aa).

In terms of domain architecture, 2Fe-2S ferredoxin-type spans 3-32; it reads YKVRLLSEAEGIDVTIDCADDVYILDAAEE.

Belongs to the 2Fe2S plant-type ferredoxin family. Requires [2Fe-2S] cluster as cofactor.

It localises to the plastid. Its subcellular location is the chloroplast. In terms of biological role, ferredoxins are iron-sulfur proteins that transfer electrons in a wide variety of metabolic reactions. The protein is Ferredoxin of Porphyridium purpureum (Red alga).